Consider the following 436-residue polypeptide: Trigger factor (436 aa).

The 86-residue stretch at 161–246 (DDQLNIDFVG…VNSVAEPKLP (86 aa)) folds into the PPIase FKBP-type domain.

It belongs to the FKBP-type PPIase family. Tig subfamily.

Its subcellular location is the cytoplasm. The catalysed reaction is [protein]-peptidylproline (omega=180) = [protein]-peptidylproline (omega=0). In terms of biological role, involved in protein export. Acts as a chaperone by maintaining the newly synthesized protein in an open conformation. Functions as a peptidyl-prolyl cis-trans isomerase. The sequence is that of Trigger factor from Pseudomonas paraeruginosa (strain DSM 24068 / PA7) (Pseudomonas aeruginosa (strain PA7)).